The chain runs to 435 residues: D-inositol 3-phosphate glycosyltransferase (435 aa).

Residue H25 coordinates 1D-myo-inositol 3-phosphate. Residues 31-32 (QP) and G39 each bind UDP-N-acetyl-alpha-D-glucosamine. 1D-myo-inositol 3-phosphate contacts are provided by residues 36 to 41 (DAGGMN), K94, Y127, T151, and R171. Positions 245 and 250 each coordinate UDP-N-acetyl-alpha-D-glucosamine. The Mg(2+) site is built by Y320, R321, and A323. Residues E333 and E341 each contribute to the UDP-N-acetyl-alpha-D-glucosamine site. T347 is a binding site for Mg(2+).

It belongs to the glycosyltransferase group 1 family. MshA subfamily. In terms of assembly, homodimer.

It carries out the reaction 1D-myo-inositol 3-phosphate + UDP-N-acetyl-alpha-D-glucosamine = 1D-myo-inositol 2-acetamido-2-deoxy-alpha-D-glucopyranoside 3-phosphate + UDP + H(+). In terms of biological role, catalyzes the transfer of a N-acetyl-glucosamine moiety to 1D-myo-inositol 3-phosphate to produce 1D-myo-inositol 2-acetamido-2-deoxy-glucopyranoside 3-phosphate in the mycothiol biosynthesis pathway. The chain is D-inositol 3-phosphate glycosyltransferase from Streptosporangium roseum (strain ATCC 12428 / DSM 43021 / JCM 3005 / KCTC 9067 / NCIMB 10171 / NRRL 2505 / NI 9100).